The primary structure comprises 222 residues: MATPQSVFVFAICILMITELILASKNYYDILGVPKSASERQIKKAFHKLAMKYHPDKNKSPDAEAKFREIAEAYETLSDANRRKEYDIIGHSAFTNGKGQRSNGSPFEQSFNFNFDDLFKDFNLFGQNQNTRSKKHFENHFQTRQDGSSRQRHHFQEFSFGGGLFDDMFEDMEKMFSFSGFDSTNRRTVQTENRFHGSSKHCRTVTQRRGNMVTTYTDCSGQ.

Residues 1–23 form the signal peptide; that stretch reads MATPQSVFVFAICILMITELILA. A J domain is found at 26–90; the sequence is NYYDILGVPK…NRRKEYDIIG (65 aa). A divergent targeting domain region spans residues 91–222; that stretch reads HSAFTNGKGQ…VTTYTDCSGQ (132 aa). Position 133 is a phosphoserine (Ser133).

In terms of assembly, interacts with HSPA5/BiP; interaction is direct. Interacts with ERN1/IRE1 (via the luminal region). Interacts with DERL1.

Its subcellular location is the endoplasmic reticulum lumen. Functionally, co-chaperone for Hsp70 protein HSPA5/BiP that acts as a key repressor of the ERN1/IRE1-mediated unfolded protein response (UPR). J domain-containing co-chaperones stimulate the ATPase activity of Hsp70 proteins and are required for efficient substrate recognition by Hsp70 proteins. In the unstressed endoplasmic reticulum, interacts with the luminal region of ERN1/IRE1 and selectively recruits HSPA5/BiP: HSPA5/BiP disrupts the dimerization of the active ERN1/IRE1 luminal region, thereby inactivating ERN1/IRE1. Also involved in endoplasmic reticulum-associated degradation (ERAD) of misfolded proteins. Required for survival of B-cell progenitors and normal antibody production. This chain is DnaJ homolog subfamily B member 9, found in Rattus norvegicus (Rat).